Consider the following 147-residue polypeptide: D-aminoacyl-tRNA deacylase (147 aa).

A Gly-cisPro motif, important for rejection of L-amino acids motif is present at residues 137-138 (GP).

It belongs to the DTD family. Homodimer.

The protein localises to the cytoplasm. The catalysed reaction is glycyl-tRNA(Ala) + H2O = tRNA(Ala) + glycine + H(+). It carries out the reaction a D-aminoacyl-tRNA + H2O = a tRNA + a D-alpha-amino acid + H(+). Its function is as follows. An aminoacyl-tRNA editing enzyme that deacylates mischarged D-aminoacyl-tRNAs. Also deacylates mischarged glycyl-tRNA(Ala), protecting cells against glycine mischarging by AlaRS. Acts via tRNA-based rather than protein-based catalysis; rejects L-amino acids rather than detecting D-amino acids in the active site. By recycling D-aminoacyl-tRNA to D-amino acids and free tRNA molecules, this enzyme counteracts the toxicity associated with the formation of D-aminoacyl-tRNA entities in vivo and helps enforce protein L-homochirality. The protein is D-aminoacyl-tRNA deacylase of Bacillus pumilus (strain SAFR-032).